Reading from the N-terminus, the 181-residue chain is Transmembrane protein 154 (181 aa).

Residues Met1–Gly22 form the signal peptide. Residues Ser19–Ser47 are disordered. The Extracellular segment spans residues Asn23–Glu74. Residues Phe75–Ile95 form a helical membrane-spanning segment. The Cytoplasmic segment spans residues Ala96–Ser181. Positions Arg103–Leu122 are disordered. Residues Glu107–Gln118 are compositionally biased toward polar residues. Tyr160 carries the post-translational modification Phosphotyrosine. The segment at Glu161 to Ser181 is disordered. Residue Ser177 is modified to Phosphoserine.

It localises to the membrane. The polypeptide is Transmembrane protein 154 (Tmem154) (Mus musculus (Mouse)).